The chain runs to 460 residues: V-type ATP synthase beta chain (460 aa).

The protein belongs to the ATPase alpha/beta chains family.

Produces ATP from ADP in the presence of a proton gradient across the membrane. The V-type beta chain is a regulatory subunit. In Thermotoga neapolitana (strain ATCC 49049 / DSM 4359 / NBRC 107923 / NS-E), this protein is V-type ATP synthase beta chain.